A 797-amino-acid chain; its full sequence is Discoidin domain-containing receptor tyrosine kinase B (797 aa).

Positions 1–19 (MKLLLYLFGVTFHSNTVVA) are cleaved as a signal peptide. Topologically, residues 20–384 (LELRECSHQL…VTEHDDGTSM (365 aa)) are extracellular. The region spanning 25–181 (CSHQLGMSNR…VCMRVEVFGC (157 aa)) is the F5/8 type C domain. Residues Cys25 and Cys181 are joined by a disulfide bond. The interval 46 to 66 (SFDLQSTGPQHARAHQESGSG) is disordered. N-linked (GlcNAc...) asparagine glycans are attached at residues Asn141, Asn167, Asn264, and Asn353. A helical membrane pass occupies residues 385–405 (FAFIIFFFMFLIVAVIILTVL). Topologically, residues 406–797 (YRKREYRVKA…LVHTSPHIHF (392 aa)) are cytoplasmic. Positions 527–785 (LICVSRIGQG…PSFENVHLHL (259 aa)) constitute a Protein kinase domain. Residues 533–541 (IGQGEFGEV) and Lys554 contribute to the ATP site. Asp645 functions as the Proton acceptor in the catalytic mechanism.

It belongs to the protein kinase superfamily. Tyr protein kinase family. Insulin receptor subfamily. As to quaternary structure, interacts with shc-1. Autophosphorylated on tyrosine residues. Post-translationally, N-glycosylation at Asn-141 is required for axon regeneration after injury but is dispensable for kinase activity and axon localization. Expressed in some neurons in head and tail, some motoneurons in ventral nerve cord, in PVP interneurons, seam cells, rectal gland cells, vulva cells and some non-neuronal cells in the tail. Expressed in D-type motor neurons.

The protein resides in the cell membrane. It is found in the cell projection. The protein localises to the axon. It localises to the perikaryon. The catalysed reaction is L-tyrosyl-[protein] + ATP = O-phospho-L-tyrosyl-[protein] + ADP + H(+). Functionally, tyrosine-protein kinase receptor which, together with ddr-1, is involved in axon guidance to establish the tracts for the ventral and dorsal nerve cords during nervous system development. Acts upstream of the adapter shc-1, and the tyrosine kinase receptors svh-1 and svh-2 to regulate axon regeneration following injury in D-type motor neurons. May mediate axon regeneration in association with the collagen emb-9. This Caenorhabditis elegans protein is Discoidin domain-containing receptor tyrosine kinase B.